We begin with the raw amino-acid sequence, 728 residues long: 1,4-alpha-glucan branching enzyme GlgB (728 aa).

The active-site Nucleophile is the aspartate 405. Glutamate 458 serves as the catalytic Proton donor.

The protein belongs to the glycosyl hydrolase 13 family. GlgB subfamily. In terms of assembly, monomer.

The catalysed reaction is Transfers a segment of a (1-&gt;4)-alpha-D-glucan chain to a primary hydroxy group in a similar glucan chain.. The protein operates within glycan biosynthesis; glycogen biosynthesis. Catalyzes the formation of the alpha-1,6-glucosidic linkages in glycogen by scission of a 1,4-alpha-linked oligosaccharide from growing alpha-1,4-glucan chains and the subsequent attachment of the oligosaccharide to the alpha-1,6 position. The chain is 1,4-alpha-glucan branching enzyme GlgB from Salmonella paratyphi B (strain ATCC BAA-1250 / SPB7).